Reading from the N-terminus, the 3251-residue chain is MEPEDLPWPDELEEEEEEEEEEGEEEEGKKEVENASAAATEEALTSEESGRLEEFEEAGPDLDFNYESQRQESSDEEEDELAKAWLQAHPDRPGSAFSLPPPTPPPPPPPLSPRLRYTPVEHLGKTEVVPLTCRVWQQSSYQDNSRAQFSNSSTMLLETGVRWGSEEDQRTESWHCLPQERDSSQTLAMSQTEIGRVEGTEVPDLPSQEGGLPAQSQCPGKKPKLNVLCSPLLVIQDNFAAPDLPLLTCLIQDQEEVEPDSLFQQSELEFAPLRGIPDKSEDSEWLARPSEVSEALIQATSETSSDLANSCFSISQHPLTEGLQGKAESGVLTRCGDAKYSSLYENLGAQSERIAVLQREVGCSNLGISQASPSSLPSFVPQEPTSEPEYHSSNLRMLRVSPDTLLTTHTHSAGSADQKIGAAVVSSAYSQEIKPGSFHQEELPDRHLNEEIRKVSPALRTAGQKPEMLPVQSSSYSKGMKSIFYQHPVSHGHQGKEPLSVSAVCGSAGNKAFHQLSTLSDSLLTEETWPVSVIPGLGNQKTPLPSEFSLSYSHRGKNLPEDVVKVSTDSGSAHKKADILTASSRTYQHKMKPANIYHQELPDSRVPIGTRKVAFESGPAGQKSGVSHPYGEMPSVFYQQGLPDRHSAKSPTKTFIPGPADQKTDLSPVPPTSSSHAEKPVSPYQLTLPGSHLPEDVFKASSVCKSSDELSGITALTSASYSYKGRPNSSYQQKFPDSHLNEEAQKILGTTGTVDQKTVTPTMSSSFLQKEKPSIFYQQTLPDGGLSEEDLQVSAVPWPADQNIAIPTVTSAAFSQREKPRIFYQQTLSVDRLPGEPLNVLGTSGPPDQNTGAPTVTPSSYFPGEESIIFYQAGFPGNTLSAMSFKVPRISGSTEQTNVTTGSSSSYSVGEKSIIFYHQALPDGRLPQEASPAPADLNTGEPPMYLASCSVGVKPIIFYQQPMSDSQRTKGHKESDVPGPTDQKTGIATVHSTSQSYIGRRTVSYQKEFPDLSEKALKVLGDVGSTEQKTQIPVVSSALLHKEGPSAYQEDLPDLTEEPLQILGVSEEVSSSSYQRKLPDHIEVFLKSVGSGSADRKTGAQIVSSSREKSSGFHQQELPNTGGDAVDAFHPEPVVQEVRKVQTPGAPAGPSSSHFHKEKLSDYQKASPHRDLTESSLKASTVPGLSDQKKKPAVSSGFCLHKEKHEISASALLNCQTAELLTVTQRSCLHREDPAISTVIKPDDQKIPLPTTFHGSSDQKVKPVIFVQKQLRDRDQSEDIPKISTVSEPTVVNTVLPVLLPGSYSHREKSDSFYPQELPDGHLTEVDLKVSSGLGQADQISGLPTGIPGTYSHSEKHQLISEHVQELMDNLNSSESSCLSVDSMPLNSQIDDGVIICKPESLGFANAGCEEMQNIDRGSKTLKEIQTLLMEAENMALKRCNFSVPLVPFRDVNDVSFIRSKKVVCFKESSTTDVCTQRESFVEEVPHIEYVQKDIGTQTNLKYQRGVGNWEFISSATFRSPLQEAEGTARMAYDETFRQYKAARSVMRSEPEGCSTGIGNKMIIPMMTIIKSDSSSDVSDGCCSWDNNLPESLESVSDVFLNFFPYTSPKTSITDSREEEWLSESEDGYGSTDSLAAHVKYLLQCETSLNQAKQILKNAEEEEYRVRTQAWNLKFNLGRDRGYSISELNEDDRRKVEEIKAKLFGHGRATHMSEGLRSPQGIGCLPEAVCSRIIIESHEKGCFRTLTAEQPRPDSCHCAFRSVEPSDLIRGHRSPSSWRGRHINLSRSIEQSNPCFKVGSSFQLQSHPPFQKLLPDDIKISKGVGMPVHAYMDPQPSELVEPTCVPAKEMDFPSSSQILPPEPKKQFTTAITFSSHEHSECISDSSGCKVGVTADSQCSGPSLGVFKPHIPEEQISPRDLKQKTSFQSSLERHGSTPVTILADGSRQRQKLPVDFEHSHQKEKLLQRLGFKVSHSEPNVSTNVSNFKGVQFSGKDTIVSQDKLTSTVEVKEKNVTVTPDLPSCIFLEQPELFEESHTPHTDLQMRKYPSPSCPEIASRIFLEQPKLSEQSKAPHVDREIREDHSFFPKCQDYIVADPSPDFPDQQQCKPPDVVGHTRKQNSLLSEGQDYELEEVQHIPQSYFSNMVNVEAKVSDAISQSAPDHCTAASTPPSNRKALSCVRITLCPKTSSKLDSGTLGERFHSLDPASKTRINSEFNSDLRIISSRSLEPTSKLLTCKPVAQDQESLVFLGPKSPLDLQVAQSSLPDSKTIFQDLKTKPPQNSQIVTSRQTQVNISHLEGYSKPEGTPVSADGSQEQSKVSFTTSFGKLSSDAITQITTESPEKTTFSSEIFIHADDRGQGILDPMAQKPSRFASSSSVQQIPASHGKDAQPVLLPYKPSGSSKMYYVPLLKRVPSYLDSKSDTTVESSHSGSNDAIAPDFPPQMLGTRDDDLSNTVNIKHKEGIYSKRAATKGKNPSQKGDAAAPVQMPITWDENVLDENQEEVISRGVVIKMAGPEEMSSLEKDLAGPSDITVQDRKTENLPDTKSIKQKEGSLEIESECHSAFENTAHSVFRSAKFYFHHPVHLPHEQDFCHESLGRSVFMQHSWKDFFHHHSGHSCLPPPGPSSDKLDKTKMDYTRIKSLSINLNLGEHEKIHTIKNQARDPKGKRQANEQKKDQKVTPELTTECPVSLNELWNRYQERQKQQNPSGACDTKELSLVERLDRLAKLLQNPITHSLRASESAQDDSRGGHRAREWTGRRQQKQKGKQHRKWSKSLERGQSTGDFRKSKVFSPHQGGKSSQFKIEQIKLDKYILRKEPGFNNVSNTSLDSRPSEESVSLTDSPNIFSSTDSPVDSDVLTPTDRDMPLNERSSSISTIDTVRLIQAFGQDRLSLSPRRIKLYSTVTSQRRRYLEQPCKHNRKALNTACPQMTSEHSRRRHIQVANHMTSSDSVSSPGSLLSLDSALSNEETVRMVSKGVQAGNLEIVAGVKKYTQDVGVTFPTPSSSEARLEEDSDVTSSSEEKAKEKKFLSNYLQTKNLRKNKPNPCAGVSWFVPVESGQSGSKKENLPKIYRPVISWFEPVTKTKPWREPLREQNWQAQCMNSRGSLGGPGRDSGQVSLRPFVRATLQESLQLHRPDFISHSGERIKRLKLLVQERKLQSLFQSEREALFHSARPLPRRVLLAVQKNKPIGKKEMIQRTRRIYEQLPEVKKKREEEKRKSEYKSYWLRAQHYKMKVTNHLLGRKVPWD.

Residues 1-26 show a composition bias toward acidic residues; it reads MEPEDLPWPDELEEEEEEEEEEGEEE. Residues 1-116 form a disordered region; the sequence is MEPEDLPWPD…PPPPLSPRLR (116 aa). Positions 34-47 are enriched in low complexity; sequence NASAAATEEALTSE. Positions 99-112 are enriched in pro residues; sequence LPPPTPPPPPPPLS. S401 bears the Phosphoserine mark. Repeat copies occupy residues 440-485, 486-534, 540-587, 588-638, 639-684, 685-731, 732-777, 778-824, 825-871, 872-917, 918-959, 960-1005, 1006-1048, 1115-1163, 1164-1208, 1269-1314, and 1315-1362. The tract at residues 440-1362 is 17 X 47 AA approximate tandem repeat; that stretch reads QEELPDRHLN…HSEKHQLISE (923 aa). The interval 615 to 686 is disordered; sequence FESGPAGQKS…AEKPVSPYQL (72 aa). Positions 963–986 are disordered; that stretch reads MSDSQRTKGHKESDVPGPTDQKTG. Disordered regions lie at residues 1094–1115 and 1142–1189; these read ADRKTGAQIVSSSREKSSGFHQ and QTPG…SDQK. Basic and acidic residues predominate over residues 1158–1173; the sequence is EKLSDYQKASPHRDLT. The residue at position 1305 (S1305) is a Phosphoserine. Residues S1623, S1788, S1916, and S1958 each carry the phosphoserine modification. 6 disordered regions span residues 2421–2452, 2464–2485, 2659–2685, 2738–2804, 2822–2871, and 3002–3027; these read KSDTTVESSHSGSNDAIAPDFPPQMLGTRDDD, GIYSKRAATKGKNPSQKGDAAA, IKNQARDPKGKRQANEQKKDQKVTPEL, SLRA…SSQF, FNNV…PLNE, and FPTPSSSEARLEEDSDVTSSSEEKAK. Polar residues predominate over residues 2423-2434; the sequence is DTTVESSHSGSN. 2 stretches are compositionally biased toward basic and acidic residues: residues 2659 to 2681 and 2747 to 2760; these read IKNQARDPKGKRQANEQKKDQKV and DDSRGGHRAREWTG. Basic residues predominate over residues 2762 to 2775; sequence RQQKQKGKQHRKWS. The span at 2823 to 2854 shows a compositional bias: polar residues; the sequence is NNVSNTSLDSRPSEESVSLTDSPNIFSSTDSP. The interval 3129–3251 is ALMS motif; the sequence is TLQESLQLHR…HLLGRKVPWD (123 aa).

This sequence belongs to the ALMS1 family. As to expression, ubiquitously expressed.

It is found in the cytoplasm. The protein resides in the cytoskeleton. It localises to the microtubule organizing center. Its subcellular location is the centrosome. The protein localises to the cilium basal body. It is found in the spindle pole. Involved in PCM1-dependent intracellular transport. Required, directly or indirectly, for the localization of NCAPD2 to the proximal ends of centrioles. Required for proper formation and/or maintenance of primary cilia (PC), microtubule-based structures that protrude from the surface of epithelial cells. The sequence is that of Centrosome-associated protein ALMS1 (Alms1) from Mus musculus (Mouse).